The following is a 227-amino-acid chain: Lectin (227 aa).

The first 28 residues, Met-1–Ala-28, serve as a signal peptide directing secretion. Residue Gln-29 is modified to Pyrrolidone carboxylic acid. Chitin-binding type-1 domains are found at residues Gln-29–Ser-70, Ser-71–Ala-113, Asp-114–Pro-156, and Glu-157–Lys-199. Cystine bridges form between Cys-31–Cys-46, Cys-40–Cys-52, Cys-45–Cys-59, Cys-63–Cys-68, Cys-74–Cys-89, Cys-83–Cys-95, Cys-88–Cys-102, Cys-106–Cys-111, Cys-117–Cys-132, Cys-126–Cys-138, Cys-131–Cys-145, Cys-149–Cys-154, Cys-160–Cys-175, Cys-169–Cys-181, Cys-174–Cys-188, and Cys-192–Cys-197. A substrate-binding site is contributed by Met-38–Cys-40. Ser-90–Tyr-101 contributes to the substrate binding site. Ser-142–Glu-143 serves as a coordination point for substrate. Residues Asp-202–Val-227 constitute a propeptide that is removed on maturation. Asn-211 is a glycosylation site (N-linked (GlcNAc...) asparagine).

In terms of biological role, N-acetyl-D-glucosamine binding lectin. The chain is Lectin from Oryza sativa subsp. indica (Rice).